The sequence spans 201 residues: 3-isopropylmalate dehydratase small subunit 1 (201 aa).

The protein belongs to the LeuD family. LeuD type 1 subfamily. As to quaternary structure, heterodimer of LeuC and LeuD.

It catalyses the reaction (2R,3S)-3-isopropylmalate = (2S)-2-isopropylmalate. It functions in the pathway amino-acid biosynthesis; L-leucine biosynthesis; L-leucine from 3-methyl-2-oxobutanoate: step 2/4. Catalyzes the isomerization between 2-isopropylmalate and 3-isopropylmalate, via the formation of 2-isopropylmaleate. This chain is 3-isopropylmalate dehydratase small subunit 1, found in Salmonella typhimurium (strain LT2 / SGSC1412 / ATCC 700720).